Reading from the N-terminus, the 275-residue chain is Formamidopyrimidine-DNA glycosylase (275 aa).

The active-site Schiff-base intermediate with DNA is P2. The active-site Proton donor is the E3. K58 acts as the Proton donor; for beta-elimination activity in catalysis. DNA is bound by residues H91 and R110. The segment at 238-272 (QVYGQTGKPCPRCGQAIVKLKVGGRGTHICPKCQK) adopts an FPG-type zinc-finger fold. R262 serves as the catalytic Proton donor; for delta-elimination activity.

This sequence belongs to the FPG family. In terms of assembly, monomer. Requires Zn(2+) as cofactor.

The enzyme catalyses Hydrolysis of DNA containing ring-opened 7-methylguanine residues, releasing 2,6-diamino-4-hydroxy-5-(N-methyl)formamidopyrimidine.. It catalyses the reaction 2'-deoxyribonucleotide-(2'-deoxyribose 5'-phosphate)-2'-deoxyribonucleotide-DNA = a 3'-end 2'-deoxyribonucleotide-(2,3-dehydro-2,3-deoxyribose 5'-phosphate)-DNA + a 5'-end 5'-phospho-2'-deoxyribonucleoside-DNA + H(+). Functionally, involved in base excision repair of DNA damaged by oxidation or by mutagenic agents. Acts as a DNA glycosylase that recognizes and removes damaged bases. Has a preference for oxidized purines, such as 7,8-dihydro-8-oxoguanine (8-oxoG). Has AP (apurinic/apyrimidinic) lyase activity and introduces nicks in the DNA strand. Cleaves the DNA backbone by beta-delta elimination to generate a single-strand break at the site of the removed base with both 3'- and 5'-phosphates. In Streptococcus pyogenes serotype M28 (strain MGAS6180), this protein is Formamidopyrimidine-DNA glycosylase.